The chain runs to 120 residues: Large ribosomal subunit protein uL18 (120 aa).

The protein belongs to the universal ribosomal protein uL18 family. As to quaternary structure, part of the 50S ribosomal subunit; part of the 5S rRNA/L5/L18/L25 subcomplex. Contacts the 5S and 23S rRNAs.

In terms of biological role, this is one of the proteins that bind and probably mediate the attachment of the 5S RNA into the large ribosomal subunit, where it forms part of the central protuberance. The chain is Large ribosomal subunit protein uL18 from Macrococcus caseolyticus (strain JCSC5402) (Macrococcoides caseolyticum).